The sequence spans 350 residues: uncharacterized protein (350 aa).

The 164-residue stretch at 171–334 (PTVVIAGYPN…LKERLKKIAI (164 aa)) folds into the OBG-type G domain. GTP is bound by residues 177 to 184 (GYPNVGKS), 219 to 223 (DTPGL), and 286 to 289 (NKID).

It belongs to the TRAFAC class OBG-HflX-like GTPase superfamily. OBG GTPase family. NOG subfamily.

This is an uncharacterized protein from Methanocaldococcus jannaschii (strain ATCC 43067 / DSM 2661 / JAL-1 / JCM 10045 / NBRC 100440) (Methanococcus jannaschii).